The chain runs to 161 residues: Cyclic pyranopterin monophosphate synthase (161 aa).

Substrate-binding positions include 75–77 and 113–114; these read LCH and ME. The active site involves Asp128.

Belongs to the MoaC family. As to quaternary structure, homohexamer; trimer of dimers.

The catalysed reaction is (8S)-3',8-cyclo-7,8-dihydroguanosine 5'-triphosphate = cyclic pyranopterin phosphate + diphosphate. Its pathway is cofactor biosynthesis; molybdopterin biosynthesis. Its function is as follows. Catalyzes the conversion of (8S)-3',8-cyclo-7,8-dihydroguanosine 5'-triphosphate to cyclic pyranopterin monophosphate (cPMP). This chain is Cyclic pyranopterin monophosphate synthase, found in Erwinia tasmaniensis (strain DSM 17950 / CFBP 7177 / CIP 109463 / NCPPB 4357 / Et1/99).